The chain runs to 384 residues: GTPase Obg (384 aa).

The Obg domain maps to Met1 to Leu159. Positions Ala20–Trp46 are disordered. Gly residues predominate over residues Gly33 to Gly43. An OBG-type G domain is found at Ala160–Ile348. Residues Gly166–Ser173, Phe191–His195, Asp213–Gly216, Asn284–Asp287, and Ser329–Leu331 each bind GTP. The Mg(2+) site is built by Ser173 and Thr193. Residues Ala364 to Glu384 are disordered.

The protein belongs to the TRAFAC class OBG-HflX-like GTPase superfamily. OBG GTPase family. As to quaternary structure, monomer. Mg(2+) serves as cofactor.

Its subcellular location is the cytoplasm. An essential GTPase which binds GTP, GDP and possibly (p)ppGpp with moderate affinity, with high nucleotide exchange rates and a fairly low GTP hydrolysis rate. Plays a role in control of the cell cycle, stress response, ribosome biogenesis and in those bacteria that undergo differentiation, in morphogenesis control. This is GTPase Obg from Neisseria meningitidis serogroup A / serotype 4A (strain DSM 15465 / Z2491).